The following is a 126-amino-acid chain: MPKKAGATSKGKNQTKEPETPPPPTGPVATDSKGFVTIAIHAKPGSKQNAVTDLNTEAVGVAIAAPPSEGEANAELCRYLSKVLDLRKSDVVLDKGGKSREKVVKLLASTTPEEVLEKLRTEAEKK.

Residues 1 to 33 (MPKKAGATSKGKNQTKEPETPPPPTGPVATDSK) are disordered. Serine 89 carries the post-translational modification Phosphoserine.

It belongs to the UPF0235 family.

This chain is UPF0235 protein C15orf40 homolog, found in Rattus norvegicus (Rat).